The sequence spans 579 residues: Vitamin B6 transporter TPN1 (579 aa).

A run of 12 helical transmembrane segments spans residues 99 to 119 (TGGLSSMSSFLLGPLLFGLSF), 123 to 143 (LASSLISVTIGCLIAAYCSIM), 158 to 178 (LFGWWFVKLVALASIIGVMGW), 199 to 219 (PLWVGIVIVTVCSFLVAIFGI), 222 to 242 (VIKVETYLSVPVLTAFLLLYI), 275 to 295 (LCYSITATWGSITADYYILFP), 303 to 323 (IFCLTFFGTFLPTCFVGILGL), 363 to 383 (VVVLVFSLVSNNIINTYSAAF), 395 to 415 (IPRWFWSIVCTIICLVCALIG), 422 to 442 (ILGNFLPMIGYWISMYFILLF), 520 to 540 (FAFIVGVAGVVVGMAQAYWIG), and 546 to 566 (FGEYGGDVAMWLSMAFSGVVY).

This sequence belongs to the purine-cytosine permease (2.A.39) family.

The protein resides in the membrane. Functionally, thiamine-regulated, high affinity import carrier of pyridoxine, pyridoxal and pyridoxamine. The polypeptide is Vitamin B6 transporter TPN1 (TPN1) (Saccharomyces cerevisiae (Baker's yeast)).